The following is a 246-amino-acid chain: Small ribosomal subunit protein uS2 (246 aa).

The protein belongs to the universal ribosomal protein uS2 family.

In Azotobacter vinelandii (strain DJ / ATCC BAA-1303), this protein is Small ribosomal subunit protein uS2.